Consider the following 229-residue polypeptide: NADH dehydrogenase [ubiquinone] iron-sulfur protein 8, mitochondrial (229 aa).

A mitochondrion-targeting transit peptide spans 1–41 (MAAILARKSLSALRSRQLVLAGHTIEGTNGYNRTLLGTRSF). 2 consecutive 4Fe-4S ferredoxin-type domains span residues 121–150 (RRYA…IEAE) and 160–189 (TRYD…EGPN). Cys-130, Cys-133, Cys-136, Cys-140, Cys-169, Cys-172, Cys-175, and Cys-179 together coordinate [4Fe-4S] cluster.

Belongs to the complex I 23 kDa subunit family. As to quaternary structure, complex I is composed of about 45 different subunits. This is a component of the iron-sulfur (IP) fragment of the enzyme. The cofactor is [4Fe-4S] cluster. As to expression, lowest expression found in storage tissues of tubers. Higher expression in older leaves than younger ones. Highest expression found in flowers.

The protein localises to the mitochondrion inner membrane. It carries out the reaction a ubiquinone + NADH + 5 H(+)(in) = a ubiquinol + NAD(+) + 4 H(+)(out). Its function is as follows. Core subunit of the mitochondrial membrane respiratory chain NADH dehydrogenase (Complex I) that is believed to belong to the minimal assembly required for catalysis. Complex I functions in the transfer of electrons from NADH to the respiratory chain. The immediate electron acceptor for the enzyme is believed to be ubiquinone. May donate electrons to ubiquinone. This chain is NADH dehydrogenase [ubiquinone] iron-sulfur protein 8, mitochondrial, found in Solanum tuberosum (Potato).